A 264-amino-acid polypeptide reads, in one-letter code: Small ribosomal subunit protein uS2 (264 aa).

Belongs to the universal ribosomal protein uS2 family.

In Helicobacter pylori (strain Shi470), this protein is Small ribosomal subunit protein uS2.